The sequence spans 22 residues: Chlorate reductase subunit gamma (22 aa).

Positions 1–22 (EXSEQNPNILEIKPGDTVKVXT) are disordered.

In terms of assembly, heterotrimer of alpha, beta and gamma subunits. The cofactor is heme b.

It is found in the cytoplasm. May transfer electrons to the iron-sulfur centers of the beta subunit of chlorate reductase. This is Chlorate reductase subunit gamma from Stutzerimonas chloritidismutans (Pseudomonas chloritidismutans).